Here is a 329-residue protein sequence, read N- to C-terminus: Peroxidase 17 (329 aa).

Residues 1–19 form the signal peptide; sequence MSLLPHLILYLTLLTVVVT. Disulfide bonds link Cys32-Cys112, Cys65-Cys70, Cys118-Cys315, and Cys197-Cys229. Catalysis depends on His63, which acts as the Proton acceptor. 5 residues coordinate Ca(2+): Asp64, Val67, Gly69, Asp71, and Ser73. Pro160 contacts substrate. 2 N-linked (GlcNAc...) asparagine glycosylation sites follow: Asn165 and Asn177. His190 lines the heme b pocket. Ser191 serves as a coordination point for Ca(2+). Residues Asn206 and Asn236 are each glycosylated (N-linked (GlcNAc...) asparagine). Ca(2+) contacts are provided by Asp242, Thr244, and Asp249.

The protein belongs to the peroxidase family. Classical plant (class III) peroxidase subfamily. Heme b serves as cofactor. Requires Ca(2+) as cofactor.

Its subcellular location is the secreted. It localises to the vacuole. It catalyses the reaction 2 a phenolic donor + H2O2 = 2 a phenolic radical donor + 2 H2O. In terms of biological role, removal of H(2)O(2), oxidation of toxic reductants, biosynthesis and degradation of lignin, suberization, auxin catabolism, response to environmental stresses such as wounding, pathogen attack and oxidative stress. These functions might be dependent on each isozyme/isoform in each plant tissue. The polypeptide is Peroxidase 17 (PER17) (Arabidopsis thaliana (Mouse-ear cress)).